A 437-amino-acid chain; its full sequence is 3-ketoacyl-CoA thiolase (437 aa).

The active-site Acyl-thioester intermediate is the C99. Residues H392 and C422 each act as proton acceptor in the active site.

The protein belongs to the thiolase-like superfamily. Thiolase family. Heterotetramer of two alpha chains (FadJ) and two beta chains (FadI).

Its subcellular location is the cytoplasm. The enzyme catalyses an acyl-CoA + acetyl-CoA = a 3-oxoacyl-CoA + CoA. It participates in lipid metabolism; fatty acid beta-oxidation. Catalyzes the final step of fatty acid oxidation in which acetyl-CoA is released and the CoA ester of a fatty acid two carbons shorter is formed. The sequence is that of 3-ketoacyl-CoA thiolase from Erwinia tasmaniensis (strain DSM 17950 / CFBP 7177 / CIP 109463 / NCPPB 4357 / Et1/99).